Reading from the N-terminus, the 142-residue chain is NCT transcriptional regulatory complex subunit B (142 aa).

It belongs to the NC2 beta/DR1 family. As to quaternary structure, forms the NCT transcriptional regulatory complex with nctA and mot1.

The protein resides in the nucleus. Its function is as follows. Part of the NCT transcriptional regulatory complex that acts as a key regulator of ergosterol biosynthesis and the azole exporter cdr1B. The NCT complex binds the promoters of genes linked to azole susceptibility, and especially represses the expression of cdr1B transporter. The protein is NCT transcriptional regulatory complex subunit B of Aspergillus fumigatus (strain CBS 144.89 / FGSC A1163 / CEA10) (Neosartorya fumigata).